The primary structure comprises 591 residues: Cineole synthase 1, chloroplastic (591 aa).

Residues 1 to 44 (MSSLIMQVVIPKPAKFFHNNLFSLSSKRHRFSTTTTTRGGRWAR) constitute a chloroplast transit peptide. The (2E)-geranyl diphosphate site is built by R308, D345, D349, R486, and D489. Mg(2+)-binding residues include D345 and D349. The short motif at 345-349 (DDVFD) is the DDXXD motif element. D489, T493, and E497 together coordinate Mg(2+).

It belongs to the terpene synthase family. Tpsb subfamily. Monomer. Mg(2+) serves as cofactor. It depends on Mn(2+) as a cofactor.

It is found in the plastid. Its subcellular location is the chloroplast. The catalysed reaction is (2E)-geranyl diphosphate + H2O = 1,8-cineole + diphosphate. It catalyses the reaction (2E)-geranyl diphosphate = alpha-pinene + diphosphate. It carries out the reaction (2E)-geranyl diphosphate = beta-pinene + diphosphate. The enzyme catalyses (2E)-geranyl diphosphate + H2O = (S)-alpha-terpineol + diphosphate. The catalysed reaction is (2E)-geranyl diphosphate = beta-myrcene + diphosphate. It catalyses the reaction (2E)-geranyl diphosphate = sabinene + diphosphate. Its pathway is secondary metabolite biosynthesis; terpenoid biosynthesis. In terms of biological role, monoterpene synthase (TPS) involved in the biosynthesis of monoterpene natural products, components of the chemical defense arsenal. Catalyzes the conversion of (2E)-geranyl diphosphate (GPP) into 1,8-cineole, and, as minor products, alpha-terpineol, beta-pinene, alpha-pinene, sabinene and myrcene. This is Cineole synthase 1, chloroplastic from Salvia fruticosa (Greek sage).